The chain runs to 148 residues: Phospholipase A2-alpha (148 aa).

The first 20 residues, 1-20 (MAAPIILFSFLLFFSVSVSA), serve as a signal peptide directing secretion. 6 disulfides stabilise this stretch: Cys38–Cys66, Cys42–Cys72, Cys47–Cys122, Cys59–Cys79, Cys78–Cys105, and Cys85–Cys98. Positions 58, 60, and 63 each coordinate Ca(2+). The active site involves His82. Asp83 is a binding site for Ca(2+).

Belongs to the phospholipase A2 family. Interacts with MYB30. Ca(2+) is required as a cofactor. In terms of tissue distribution, ubiquitous but expressed at a low level.

Its subcellular location is the secreted. It is found in the golgi apparatus. The protein resides in the cytoplasmic vesicle. It localises to the nucleus. It catalyses the reaction a 1,2-diacyl-sn-glycero-3-phosphocholine + H2O = a 1-acyl-sn-glycero-3-phosphocholine + a fatty acid + H(+). PA2 catalyzes the calcium-dependent hydrolysis of the 2-acyl groups in 3-sn-phosphoglycerides. Releases lysophospholipids (LPLs) and free fatty acids (FFAs) from membrane phospholipids in response to hormones and other external stimuli. Modulates the trafficking of PIN proteins to the plasma membrane. Negatively regulates MYB30 transcriptional activity and hypersensitive response control. This Arabidopsis thaliana (Mouse-ear cress) protein is Phospholipase A2-alpha.